The following is a 155-amino-acid chain: Small ribosomal subunit protein uS7c (155 aa).

This sequence belongs to the universal ribosomal protein uS7 family. Part of the 30S ribosomal subunit.

The protein localises to the plastid. Its subcellular location is the chloroplast. Functionally, one of the primary rRNA binding proteins, it binds directly to 16S rRNA where it nucleates assembly of the head domain of the 30S subunit. The polypeptide is Small ribosomal subunit protein uS7c (rps7) (Ginkgo biloba (Ginkgo)).